Consider the following 500-residue polypeptide: Trehalose-6-phosphate synthase (500 aa).

Arg-28 contacts D-glucose 6-phosphate. 48 to 49 is a binding site for UDP-alpha-D-glucose; that stretch reads GG. D-glucose 6-phosphate-binding residues include Tyr-104 and Asp-158. 2 residues coordinate UDP-alpha-D-glucose: Arg-300 and Lys-305. Arg-338 is a binding site for D-glucose 6-phosphate. Residue 403–407 participates in UDP-alpha-D-glucose binding; it reads LVAKE.

Belongs to the glycosyltransferase 20 family. Homotetramer.

The enzyme catalyses ADP-alpha-D-glucose + D-glucose 6-phosphate = alpha,alpha-trehalose 6-phosphate + ADP + H(+). It catalyses the reaction CDP-alpha-D-glucose + D-glucose 6-phosphate = alpha,alpha-trehalose 6-phosphate + CDP + H(+). The catalysed reaction is GDP-alpha-D-glucose + D-glucose 6-phosphate = alpha,alpha-trehalose 6-phosphate + GDP + H(+). It carries out the reaction TDP-alpha-D-glucose + D-glucose 6-phosphate = 5-methyl-UDP + alpha,alpha-trehalose 6-phosphate + H(+). The enzyme catalyses D-glucose 6-phosphate + UDP-alpha-D-glucose = alpha,alpha-trehalose 6-phosphate + UDP + H(+). Its pathway is glycan biosynthesis; trehalose biosynthesis. In terms of biological role, probably involved in the osmoprotection via the biosynthesis of trehalose and in the production of glycogen and alpha-glucan via the TreS-Pep2 branch involved in the biosynthesis of maltose-1-phosphate (M1P). Catalyzes the transfer of glucose from UDP-glucose (UDP-Glc) to D-glucose 6-phosphate (Glc-6-P) to form trehalose-6-phosphate. Probably also able to use ADP-Glc, CDP-Glc, GDP-Glc and TDP-Glc as glucosyl donors. The sequence is that of Trehalose-6-phosphate synthase from Mycobacterium marinum (strain ATCC BAA-535 / M).